The following is a 477-amino-acid chain: Bifunctional enzyme PyrF/PyrE (477 aa).

An OMP decarboxylase region spans residues 1 to 273 (MIFFDKLHQN…ITVRDVASCS (273 aa)). The active-site Proton donor is the Lys96. The interval 274-477 (VWLPDVFTVK…DEQFLALTAE (204 aa)) is orotate phosphoribosyltransferase. Residues Arg374, Lys375, Lys378, His380, and 400–408 (DDILISGKS) each bind 5-phospho-alpha-D-ribose 1-diphosphate.

This sequence in the N-terminal section; belongs to the OMP decarboxylase family. Type 2 subfamily. In the C-terminal section; belongs to the purine/pyrimidine phosphoribosyltransferase family. Mg(2+) is required as a cofactor.

The enzyme catalyses orotidine 5'-phosphate + H(+) = UMP + CO2. It catalyses the reaction orotidine 5'-phosphate + diphosphate = orotate + 5-phospho-alpha-D-ribose 1-diphosphate. Its pathway is pyrimidine metabolism; UMP biosynthesis via de novo pathway; UMP from orotate: step 1/2. The protein operates within pyrimidine metabolism; UMP biosynthesis via de novo pathway; UMP from orotate: step 2/2. Functionally, catalyzes the transfer of a ribosyl phosphate group from 5-phosphoribose 1-diphosphate to orotate, leading to the formation of orotidine monophosphate (OMP). Its function is as follows. Catalyzes the decarboxylation of orotidine monophosphate (OMP) to uridine monophosphate (UMP). The chain is Bifunctional enzyme PyrF/PyrE (pyrFE) from Nostoc sp. (strain PCC 7120 / SAG 25.82 / UTEX 2576).